Consider the following 147-residue polypeptide: uncharacterized protein (147 aa).

The first 21 residues, 1-21 (MRTIFVGVLLLAIMGEGRLCA), serve as a signal peptide directing secretion.

This is an uncharacterized protein from Treponema pallidum (strain Nichols).